A 133-amino-acid chain; its full sequence is Small ribosomal subunit protein uS9 (133 aa).

Residues 97 to 133 form a disordered region; the sequence is MKQELKSQGFLTRDPRKKERKKYGRKKARKSFQFSKR. A compositionally biased stretch (basic residues) spans 114-133; sequence KERKKYGRKKARKSFQFSKR.

It belongs to the universal ribosomal protein uS9 family.

The chain is Small ribosomal subunit protein uS9 (rpsI) from Chlamydia muridarum (strain MoPn / Nigg).